Here is a 201-residue protein sequence, read N- to C-terminus: Large ribosomal subunit protein eL15 (201 aa).

The protein belongs to the eukaryotic ribosomal protein eL15 family.

The polypeptide is Large ribosomal subunit protein eL15 (RPL15) (Quercus suber (Cork oak)).